Here is a 137-residue protein sequence, read N- to C-terminus: Protein shisa-5 (137 aa).

The helical transmembrane segment at 3–23 (FGATLAVGLTIFVLSVVTIII) threads the bilayer.

Belongs to the shisa family. As to quaternary structure, interacts with PDCD6; PDCD6 can stabilize SHISA5.

Its subcellular location is the endoplasmic reticulum membrane. It is found in the nucleus membrane. Can induce apoptosis in a caspase-dependent manner and plays a role in p53/TP53-dependent apoptosis. In Pongo abelii (Sumatran orangutan), this protein is Protein shisa-5 (SHISA5).